Reading from the N-terminus, the 657-residue chain is Broad substrate specificity ATP-binding cassette transporter ABCG2 (657 aa).

The disordered stretch occupies residues 1 to 25 (MSSSNDHVLVPMSQRNKNGLPGMSS). The Cytoplasmic segment spans residues 1 to 395 (MSSSNDHVLV…KNLLGNPQAS (395 aa)). Residues 48 to 285 (VKSGFLVRKT…FASAGYHCEP (238 aa)) enclose the ABC transporter domain. ATP contacts are provided by residues 79-86 (GPTGGGKS), 183-189 (RGISGGE), E210, and H242. An ABC transmembrane type-2 domain is found at 389–653 (LGNPQASVAQ…TIAYLKLLFL (265 aa)). The chain crosses the membrane as a helical span at residues 396–416 (VAQLIVTVILGLIIGALYFGL). Residues 417–428 (KNDPTGMQNRAG) are Extracellular-facing. The helical transmembrane segment at 429 to 449 (VFFFLTTNQCFTSVSAVELFV) threads the bilayer. Residues 450-477 (VEKKLFIHEYISGYYRVSSYFFGKLVSD) are Cytoplasmic-facing. The chain crosses the membrane as a helical span at residues 478 to 498 (LLPMRFLPSVIYTCILYFMLG). Topologically, residues 499-506 (LKRTVEAF) are extracellular. The chain crosses the membrane as a helical span at residues 507–527 (FIMMFTLIMVAYTASSMALAI). Residues 528 to 535 (AAGQSVVS) lie on the Cytoplasmic side of the membrane. The helical transmembrane segment at 536–556 (VATLLMTISFVFMMLFSGLLV) threads the bilayer. At 557–632 (NLRTIGPWLS…LSPWGLWRNH (76 aa)) the chain is on the extracellular side. A disulfide bridge connects residues C592 and C610. 2 N-linked (GlcNAc...) asparagine glycosylation sites follow: N596 and N600. Residues 633 to 653 (VALACMIIIFLTIAYLKLLFL) traverse the membrane as a helical segment. Residues 654-657 (KKYS) lie on the Cytoplasmic side of the membrane.

Belongs to the ABC transporter superfamily. ABCG family. Eye pigment precursor importer (TC 3.A.1.204) subfamily. In terms of assembly, homodimer; disulfide-linked. The minimal functional unit is a homodimer, but the major oligomeric form in plasma membrane is a homotetramer with possibility of higher order oligomerization up to homododecamers. Post-translationally, N-glycosylated in brain capillary, kidney and small intestine but not in heart. N-glycosylated. Glycosylation-deficient ABCG2 is normally expressed and functional. In terms of processing, phosphorylated. Phosphorylation may regulate the localization to the plasma membrane, the homooligomerization and therefore, the activity of the transporter. In terms of tissue distribution, highly expressed in brain capillary, kidney and small intestine. Lower expression in heart. Preferentially expressed (at protein level) on the luminal membrane of brain capillaries, in kidney and small intestine.

It is found in the cell membrane. The protein localises to the apical cell membrane. It localises to the mitochondrion membrane. The enzyme catalyses ATP + H2O + xenobioticSide 1 = ADP + phosphate + xenobioticSide 2.. It carries out the reaction urate(in) + ATP + H2O = urate(out) + ADP + phosphate + H(+). It catalyses the reaction indoxyl sulfate(in) + ATP + H2O = indoxyl sulfate(out) + ADP + phosphate + H(+). The catalysed reaction is sphing-4-enine 1-phosphate(in) + ATP + H2O = sphing-4-enine 1-phosphate(out) + ADP + phosphate + H(+). The enzyme catalyses estrone 3-sulfate(in) + ATP + H2O = estrone 3-sulfate(out) + ADP + phosphate + H(+). It carries out the reaction dehydroepiandrosterone 3-sulfate(in) + ATP + H2O = dehydroepiandrosterone 3-sulfate(out) + ADP + phosphate + H(+). It catalyses the reaction 4-methylumbelliferone sulfate(in) + ATP + H2O = 4-methylumbelliferone sulfate(out) + ADP + phosphate + H(+). The catalysed reaction is 5,7-dimethyl-2-methylamino-4-(3-pyridylmethyl)-1,3-benzothiazol-6-yl beta-D-glucuronate(in) + ATP + H2O = 5,7-dimethyl-2-methylamino-4-(3-pyridylmethyl)-1,3-benzothiazol-6-yl beta-D-glucuronate(out) + ADP + phosphate + H(+). The enzyme catalyses 4-methylumbelliferone beta-D-glucuronate(in) + ATP + H2O = 4-methylumbelliferone beta-D-glucuronate(out) + ADP + phosphate + H(+). It carries out the reaction 5,7-dimethyl-2-methylamino-4-(3-pyridylmethyl)-1,3-benzothiazol-6-yl sulfate(in) + ATP + H2O = 5,7-dimethyl-2-methylamino-4-(3-pyridylmethyl)-1,3-benzothiazol-6-yl sulfate(out) + ADP + phosphate + H(+). It catalyses the reaction 17beta-estradiol 17-O-(beta-D-glucuronate)(in) + ATP + H2O = 17beta-estradiol 17-O-(beta-D-glucuronate)(out) + ADP + phosphate + H(+). The catalysed reaction is methotrexate(in) + ATP + H2O = methotrexate(out) + ADP + phosphate + H(+). The enzyme catalyses riboflavin(in) + ATP + H2O = riboflavin(out) + ADP + phosphate + H(+). It carries out the reaction pheophorbide a(in) + ATP + H2O = pheophorbide a(out) + ADP + phosphate + H(+). It catalyses the reaction itaconate(in) + ATP + H2O = itaconate(out) + ADP + phosphate + H(+). Broad substrate specificity ATP-dependent transporter of the ATP-binding cassette (ABC) family that actively extrudes a wide variety of physiological compounds, dietary toxins and xenobiotics from cells. Involved in porphyrin homeostasis, mediating the export of protoporphyrin IX (PPIX) from both mitochondria to cytosol and cytosol to extracellular space, it also functions in the cellular export of heme. Also mediates the efflux of sphingosine-1-P from cells. Acts as a urate exporter functioning in both renal and extrarenal urate excretion. In kidney, it also functions as a physiological exporter of the uremic toxin indoxyl sulfate. Also involved in the excretion of steroids like estrone 3-sulfate/E1S, 3beta-sulfooxy-androst-5-en-17-one/DHEAS, and other sulfate conjugates. Mediates the secretion of the riboflavin and biotin vitamins into milk. Extrudes pheophorbide a, a phototoxic porphyrin catabolite of chlorophyll, reducing its bioavailability. Plays an important role in the exclusion of xenobiotics from the brain. It confers to cells a resistance to multiple drugs and other xenobiotics including mitoxantrone, pheophorbide, camptothecin, methotrexate, azidothymidine, and the anthracyclines daunorubicin and doxorubicin, through the control of their efflux. In placenta, it limits the penetration of drugs from the maternal plasma into the fetus. May play a role in early stem cell self-renewal by blocking differentiation. In inflammatory macrophages, exports itaconate from the cytosol to the extracellular compartment and limits the activation of TFEB-dependent lysosome biogenesis involved in antibacterial innate immune response. This chain is Broad substrate specificity ATP-binding cassette transporter ABCG2 (Abcg2), found in Rattus norvegicus (Rat).